The primary structure comprises 656 residues: Threonine--tRNA ligase (656 aa).

The TGS domain maps to 2-67 (LMSQITIILP…KDQTKVALVT (66 aa)). A catalytic region spans residues 251–542 (DHRKLGKELG…YLEHTAGHLP (292 aa)). Positions 342, 393, and 519 each coordinate Zn(2+).

This sequence belongs to the class-II aminoacyl-tRNA synthetase family. As to quaternary structure, homodimer. Zn(2+) serves as cofactor.

It is found in the cytoplasm. It carries out the reaction tRNA(Thr) + L-threonine + ATP = L-threonyl-tRNA(Thr) + AMP + diphosphate + H(+). Functionally, catalyzes the attachment of threonine to tRNA(Thr) in a two-step reaction: L-threonine is first activated by ATP to form Thr-AMP and then transferred to the acceptor end of tRNA(Thr). Also edits incorrectly charged L-seryl-tRNA(Thr). The polypeptide is Threonine--tRNA ligase (Bdellovibrio bacteriovorus (strain ATCC 15356 / DSM 50701 / NCIMB 9529 / HD100)).